The sequence spans 305 residues: Oxygen-dependent coproporphyrinogen-III oxidase (305 aa).

Residue S92 participates in substrate binding. Residues H96 and H106 each coordinate a divalent metal cation. Residue H106 is the Proton donor of the active site. 108-110 (NVR) provides a ligand contact to substrate. The a divalent metal cation site is built by H145 and H175. The interval 239 to 274 (YVEFNLLFDRGTLFGLQSGGRAESILISLPPLVRWE) is important for dimerization. Substrate is bound at residue 257–259 (GGR).

This sequence belongs to the aerobic coproporphyrinogen-III oxidase family. As to quaternary structure, homodimer. A divalent metal cation serves as cofactor.

Its subcellular location is the cytoplasm. The catalysed reaction is coproporphyrinogen III + O2 + 2 H(+) = protoporphyrinogen IX + 2 CO2 + 2 H2O. The protein operates within porphyrin-containing compound metabolism; protoporphyrin-IX biosynthesis; protoporphyrinogen-IX from coproporphyrinogen-III (O2 route): step 1/1. Its function is as follows. Involved in the heme biosynthesis. Catalyzes the aerobic oxidative decarboxylation of propionate groups of rings A and B of coproporphyrinogen-III to yield the vinyl groups in protoporphyrinogen-IX. The polypeptide is Oxygen-dependent coproporphyrinogen-III oxidase (Xylella fastidiosa (strain Temecula1 / ATCC 700964)).